A 445-amino-acid chain; its full sequence is Sterile alpha motif domain-containing protein 7 (445 aa).

A required for localization to nuclear polycomb bodies region spans residues 98–172 (HAARAEMEMY…HLQGNPILLA (75 aa)). A disordered region spans residues 193–282 (YQKPPESDTE…WDDGKGKPSE (90 aa)). A compositionally biased stretch (basic and acidic residues) spans 227 to 244 (IKDPDIEVDNQQKPRVAD). The region spanning 324 to 378 (WTVDDVYNFIRSLPGCSDYAQVFKDHAIDGETLPLLTEQHLRGTMGLKLGPALKI) is the SAM domain. A disordered region spans residues 425–445 (SIPGPQDLLSPKRTEQDVMRN). Over residues 434–445 (SPKRTEQDVMRN) the composition is skewed to basic and acidic residues.

As to quaternary structure, monomer, homodimer and homooligomer. Component of a Polycomb group (PcG) multiprotein PRC1-like complex. Interacts with PHC2 and NR2E3. Interacts with RNF1 in a PHC2-dependent manner. Interacts with SAMD11. In terms of tissue distribution, expressed in the retina and the pineal gland. In the retina, it is predominantly expressed in the outer nuclear layer and developing rod photoreceptors.

The protein localises to the nucleus. It is found in the cytoplasm. Functionally, component of a Polycomb group (PcG) multiprotein PRC1-like complex, essential for establishing rod photoreceptor cell identity and function by silencing nonrod gene expression in developing rod photoreceptor cells. Via its association with the PRC1-like complex, promotes epigenetic repressive marks H3K27me3 and H2AK119ub marks in nonrod genes, silencing their transcription. Represses Crx-controlled photoreceptor-specific gene expression. In Mus musculus (Mouse), this protein is Sterile alpha motif domain-containing protein 7 (Samd7).